The following is a 611-amino-acid chain: Urease subunit alpha 2 (611 aa).

The Urease domain occupies 154 to 611 (GGIDSHIHFI…LPMAQRYFLF (458 aa)). Ni(2+) contacts are provided by histidine 159, histidine 161, and lysine 242. Residue lysine 242 is modified to N6-carboxylysine. Position 244 (histidine 244) interacts with substrate. Ni(2+) is bound by residues histidine 271 and histidine 297. Histidine 345 (proton donor) is an active-site residue. Aspartate 385 provides a ligand contact to Ni(2+). The segment at 411–434 (GHLAPDQSAKTEQSLDNIMLSPTD) is disordered. Polar residues predominate over residues 418 to 434 (SAKTEQSLDNIMLSPTD).

Belongs to the metallo-dependent hydrolases superfamily. Urease alpha subunit family. Heterotrimer of UreA (gamma), UreB (beta) and UreC (alpha) subunits. Three heterotrimers associate to form the active enzyme. It depends on Ni cation as a cofactor. Carboxylation allows a single lysine to coordinate two nickel ions.

It is found in the cytoplasm. The enzyme catalyses urea + 2 H2O + H(+) = hydrogencarbonate + 2 NH4(+). Its pathway is nitrogen metabolism; urea degradation; CO(2) and NH(3) from urea (urease route): step 1/1. The polypeptide is Urease subunit alpha 2 (Psychrobacter cryohalolentis (strain ATCC BAA-1226 / DSM 17306 / VKM B-2378 / K5)).